Consider the following 79-residue polypeptide: Translational regulator CsrA (79 aa).

It belongs to the CsrA/RsmA family. In terms of assembly, homodimer; the beta-strands of each monomer intercalate to form a hydrophobic core, while the alpha-helices form wings that extend away from the core.

It is found in the cytoplasm. Its function is as follows. A translational regulator that binds mRNA to regulate translation initiation and/or mRNA stability. Usually binds in the 5'-UTR at or near the Shine-Dalgarno sequence preventing ribosome-binding, thus repressing translation. Its main target seems to be the major flagellin gene, while its function is anatagonized by FliW. The protein is Translational regulator CsrA of Geotalea uraniireducens (strain Rf4) (Geobacter uraniireducens).